A 373-amino-acid polypeptide reads, in one-letter code: Centrosomal protein of 41 kDa (373 aa).

A disordered region spans residues 89–137 (QRLEDNDSAASDPDAETTARTNGKGNPGEQSPSPEQFINNAGAGDSSRS). Ser-96 and Ser-99 each carry phosphoserine. The segment covering 106–127 (TARTNGKGNPGEQSPSPEQFIN) has biased composition (polar residues). Thr-109 carries the post-translational modification Phosphothreonine. A Phosphoserine modification is found at Ser-121. One can recognise a Rhodanese domain in the interval 169-266 (PDCPFLLLDV…LAQKFPEGLI (98 aa)). A disordered region spans residues 275–373 (QQALPPGSAR…SGHLQGKPWK (99 aa)). Basic and acidic residues predominate over residues 298 to 312 (NKWRFTPEDLKKIEY). An Omega-N-methylarginine modification is found at Arg-343. The segment covering 355-366 (SHSNPRSLSSGH) has biased composition (polar residues).

It belongs to the CEP41 family. Found in a complex with TTLL6. In terms of tissue distribution, expressed in testis and fetal tissues.

The protein localises to the cytoplasm. It is found in the cytoskeleton. The protein resides in the microtubule organizing center. Its subcellular location is the centrosome. It localises to the cell projection. The protein localises to the cilium. It is found in the cilium basal body. Its function is as follows. Required during ciliogenesis for tubulin glutamylation in cilium. Probably acts by participating in the transport of TTLL6, a tubulin polyglutamylase, between the basal body and the cilium. The sequence is that of Centrosomal protein of 41 kDa (CEP41) from Homo sapiens (Human).